A 49-amino-acid chain; its full sequence is Large ribosomal subunit protein bL33B (49 aa).

This sequence belongs to the bacterial ribosomal protein bL33 family.

The chain is Large ribosomal subunit protein bL33B from Oceanobacillus iheyensis (strain DSM 14371 / CIP 107618 / JCM 11309 / KCTC 3954 / HTE831).